Consider the following 337-residue polypeptide: Heat-inducible transcription repressor HrcA (337 aa).

It belongs to the HrcA family.

Its function is as follows. Negative regulator of class I heat shock genes (grpE-dnaK-dnaJ and groELS operons). Prevents heat-shock induction of these operons. In Polaromonas naphthalenivorans (strain CJ2), this protein is Heat-inducible transcription repressor HrcA.